Reading from the N-terminus, the 179-residue chain is Large ribosomal subunit protein uL6 (179 aa).

It belongs to the universal ribosomal protein uL6 family. In terms of assembly, part of the 50S ribosomal subunit.

Its function is as follows. This protein binds to the 23S rRNA, and is important in its secondary structure. It is located near the subunit interface in the base of the L7/L12 stalk, and near the tRNA binding site of the peptidyltransferase center. The protein is Large ribosomal subunit protein uL6 of Clostridium novyi (strain NT).